The chain runs to 256 residues: Phosphatidylglycerol--prolipoprotein diacylglyceryl transferase (256 aa).

Helical transmembrane passes span 19 to 39 (VHWYGLMYLIGFIGAWLLGYW), 56 to 76 (LIFYSALGVILGGRVGYMLFY), and 91 to 111 (IWEGGMSFHGGLLGVVIAAWL). R139 serves as a coordination point for a 1,2-diacyl-sn-glycero-3-phospho-(1'-sn-glycerol). Residues 231–251 (FGWLTMGQVLSIPMLLIGIWL) form a helical membrane-spanning segment.

This sequence belongs to the Lgt family.

It is found in the cell inner membrane. The catalysed reaction is L-cysteinyl-[prolipoprotein] + a 1,2-diacyl-sn-glycero-3-phospho-(1'-sn-glycerol) = an S-1,2-diacyl-sn-glyceryl-L-cysteinyl-[prolipoprotein] + sn-glycerol 1-phosphate + H(+). Its pathway is protein modification; lipoprotein biosynthesis (diacylglyceryl transfer). Catalyzes the transfer of the diacylglyceryl group from phosphatidylglycerol to the sulfhydryl group of the N-terminal cysteine of a prolipoprotein, the first step in the formation of mature lipoproteins. The sequence is that of Phosphatidylglycerol--prolipoprotein diacylglyceryl transferase from Legionella pneumophila (strain Corby).